The chain runs to 33 residues: Photosystem II reaction center protein T (33 aa).

A helical membrane pass occupies residues 3-23 (ALVYTFLLVSTLGIIFFAIFF).

The protein belongs to the PsbT family. As to quaternary structure, PSII is composed of 1 copy each of membrane proteins PsbA, PsbB, PsbC, PsbD, PsbE, PsbF, PsbH, PsbI, PsbJ, PsbK, PsbL, PsbM, PsbT, PsbY, PsbZ, Psb30/Ycf12, at least 3 peripheral proteins of the oxygen-evolving complex and a large number of cofactors. It forms dimeric complexes.

It localises to the plastid. Its subcellular location is the chloroplast thylakoid membrane. Found at the monomer-monomer interface of the photosystem II (PS II) dimer, plays a role in assembly and dimerization of PSII. PSII is a light-driven water plastoquinone oxidoreductase, using light energy to abstract electrons from H(2)O, generating a proton gradient subsequently used for ATP formation. This chain is Photosystem II reaction center protein T, found in Arabidopsis thaliana (Mouse-ear cress).